The chain runs to 1752 residues: Chitin synthase E (1752 aa).

Residue 1-8 (GESGSGKT) participates in ATP binding. The segment at 492–520 (SSKPLRMPSMARRKTSPSSRLAFDAGDAD) is disordered. Residues 558 to 582 (LDIVNKCLSSTNLNPYFIFCLKPND) are actin-binding. The next 2 membrane-spanning stretches (helical) occupy residues 789–809 (WIAL…KLFG) and 828–848 (LIIW…PGLV). In terms of domain architecture, Cytochrome b5 heme-binding spans 852–940 (QHVYSAAELS…LLDYRPTNIS (89 aa)). N-linked (GlcNAc...) asparagine glycans are attached at residues asparagine 938 and asparagine 963. The chain crosses the membrane as a helical span at residues 1099–1119 (FILAISVLICSIIVFKFLAAL). N-linked (GlcNAc...) asparagine glycans are attached at residues asparagine 1322, asparagine 1356, and asparagine 1462. 3 helical membrane passes run 1494–1514 (LSTV…YWLV), 1520–1540 (IPYT…LIFI), and 1547–1567 (MVGW…PCPS). A glycan (N-linked (GlcNAc...) asparagine) is linked at asparagine 1685. The DEK-C domain occupies 1689-1744 (LPSDDAILAEIREILRTADLMSVTKKSIKLELERAFGVNLDLKRPYINSGKGYTFP).

The protein in the N-terminal section; belongs to the TRAFAC class myosin-kinesin ATPase superfamily. Myosin family. In the C-terminal section; belongs to the chitin synthase family. Class V subfamily.

It is found in the cell membrane. The protein resides in the cell septum. Its subcellular location is the cell tip. The enzyme catalyses [(1-&gt;4)-N-acetyl-beta-D-glucosaminyl](n) + UDP-N-acetyl-alpha-D-glucosamine = [(1-&gt;4)-N-acetyl-beta-D-glucosaminyl](n+1) + UDP + H(+). Polymerizes chitin, a structural polymer of the cell wall and septum, by transferring the sugar moiety of UDP-GlcNAc to the non-reducing end of the growing chitin polymer. Important for hyphal growth and conidiophore development but not pathogenicity. In Aspergillus fumigatus (Neosartorya fumigata), this protein is Chitin synthase E.